We begin with the raw amino-acid sequence, 500 residues long: Melanopsin-like (500 aa).

The Extracellular portion of the chain corresponds to 1–65 (MSHHSSWRGH…TVDVPDHAHY (65 aa)). The N-linked (GlcNAc...) asparagine glycan is linked to N18. The chain crosses the membrane as a helical span at residues 66 to 86 (IIGSVILIVGITGVIGNALVV). Over 87-101 (YVFCRSRTLRTAGNM) the chain is Cytoplasmic. A helical transmembrane segment spans residues 102-122 (FIVNLAVADFLMSVTQSPVFF). Residues 123-138 (AASLHRRWVFGERPCE) lie on the Extracellular side of the membrane. C137 and C215 are joined by a disulfide. A helical transmembrane segment spans residues 139 to 159 (LYAFCGALFGICSMMTLTAIA). Over 160-182 (ADRCLAITQPLALVSRVSRRKAG) the chain is Cytoplasmic. A helical membrane pass occupies residues 183-203 (AVLVVVWLYSLGWSLPPFFGW). Residues 204–232 (SAYVPEGLQTSCSWDYMTFTPSVRAYTIL) are Extracellular-facing. Residues 233-253 (LFVFVFFIPLGIIGSCYFAIF) traverse the membrane as a helical segment. The Cytoplasmic portion of the chain corresponds to 254 to 286 (QTIRAAGKEIRELDCGETHKVYERMQNEWKMAK). The chain crosses the membrane as a helical span at residues 287 to 307 (VALVVIVLFIISWSPYSVVAL). Over 308–322 (TATAGYSHFLTPYMN) the chain is Extracellular. The chain crosses the membrane as a helical span at residues 323–343 (SVPAVIAKASAIHNPIIYAIT). At K330 the chain carries N6-(retinylidene)lysine. At 344-500 (HPKYRVAIAR…SDGKALLGGN (157 aa)) the chain is on the cytoplasmic side. Residues 404-428 (RWGKTRLSSASDSDSCWTESEADGS) form a disordered region. A compositionally biased stretch (polar residues) spans 409 to 428 (RLSSASDSDSCWTESEADGS).

This sequence belongs to the G-protein coupled receptor 1 family. Opsin subfamily. Expressed in a subset of retinal horizontal cells.

Its subcellular location is the cell membrane. Its function is as follows. Photoreceptor implicated in non-image-forming responses to light. This is Melanopsin-like (opn4l) from Danio rerio (Zebrafish).